A 254-amino-acid polypeptide reads, in one-letter code: Precorrin-3B C(17)-methyltransferase (254 aa).

Belongs to the precorrin methyltransferase family.

It catalyses the reaction precorrin-3B + S-adenosyl-L-methionine = precorrin-4 + S-adenosyl-L-homocysteine + 3 H(+). It participates in cofactor biosynthesis; adenosylcobalamin biosynthesis; cob(II)yrinate a,c-diamide from precorrin-2 (aerobic route): step 3/10. Functionally, methyltransferase that catalyzes the methylation of C-17 in precorrin-3B to form precorrin-4. In Sinorhizobium sp, this protein is Precorrin-3B C(17)-methyltransferase (cobJ).